Consider the following 259-residue polypeptide: Ubiquinone/menaquinone biosynthesis C-methyltransferase UbiE (259 aa).

S-adenosyl-L-methionine contacts are provided by residues T82, D103, 131–132, and S148; that span reads NA.

This sequence belongs to the class I-like SAM-binding methyltransferase superfamily. MenG/UbiE family.

The catalysed reaction is a 2-demethylmenaquinol + S-adenosyl-L-methionine = a menaquinol + S-adenosyl-L-homocysteine + H(+). It catalyses the reaction a 2-methoxy-6-(all-trans-polyprenyl)benzene-1,4-diol + S-adenosyl-L-methionine = a 5-methoxy-2-methyl-3-(all-trans-polyprenyl)benzene-1,4-diol + S-adenosyl-L-homocysteine + H(+). It participates in quinol/quinone metabolism; menaquinone biosynthesis; menaquinol from 1,4-dihydroxy-2-naphthoate: step 2/2. It functions in the pathway cofactor biosynthesis; ubiquinone biosynthesis. Its function is as follows. Methyltransferase required for the conversion of demethylmenaquinol (DMKH2) to menaquinol (MKH2) and the conversion of 2-polyprenyl-6-methoxy-1,4-benzoquinol (DDMQH2) to 2-polyprenyl-3-methyl-6-methoxy-1,4-benzoquinol (DMQH2). The sequence is that of Ubiquinone/menaquinone biosynthesis C-methyltransferase UbiE from Vibrio campbellii (strain ATCC BAA-1116).